The chain runs to 452 residues: tRNA modification GTPase MnmE (452 aa).

3 residues coordinate (6S)-5-formyl-5,6,7,8-tetrahydrofolate: Arg-24, Glu-81, and Lys-120. Residues 217–373 (GIKTAIVGKT…LIMKIEQMHI (157 aa)) enclose the TrmE-type G domain. K(+) is bound at residue Asn-227. GTP contacts are provided by residues 227 to 232 (NVGKSS), 246 to 252 (TDIHGTT), and 271 to 274 (DTAG). A Mg(2+)-binding site is contributed by Ser-231. K(+) is bound by residues Thr-246, Ile-248, and Thr-251. Thr-252 lines the Mg(2+) pocket. Position 452 (Lys-452) interacts with (6S)-5-formyl-5,6,7,8-tetrahydrofolate.

The protein belongs to the TRAFAC class TrmE-Era-EngA-EngB-Septin-like GTPase superfamily. TrmE GTPase family. As to quaternary structure, homodimer. Heterotetramer of two MnmE and two MnmG subunits. The cofactor is K(+).

It localises to the cytoplasm. In terms of biological role, exhibits a very high intrinsic GTPase hydrolysis rate. Involved in the addition of a carboxymethylaminomethyl (cmnm) group at the wobble position (U34) of certain tRNAs, forming tRNA-cmnm(5)s(2)U34. The sequence is that of tRNA modification GTPase MnmE from Mesoplasma florum (strain ATCC 33453 / NBRC 100688 / NCTC 11704 / L1) (Acholeplasma florum).